Reading from the N-terminus, the 181-residue chain is Oligoribonuclease (181 aa).

The Exonuclease domain maps to 8 to 171; the sequence is LIWIDLEMTG…DDIRESVAEL (164 aa). Tyr-129 is a catalytic residue.

This sequence belongs to the oligoribonuclease family.

It localises to the cytoplasm. 3'-to-5' exoribonuclease specific for small oligoribonucleotides. This is Oligoribonuclease from Photorhabdus laumondii subsp. laumondii (strain DSM 15139 / CIP 105565 / TT01) (Photorhabdus luminescens subsp. laumondii).